The following is a 603-amino-acid chain: Thread biopolymer filament subunit gamma (603 aa).

Positions 1 to 191 are head; that stretch reads MASHSSVSYR…ENETMEEELK (191 aa). The region spanning 158-476 is the IF rod domain; it reads VKNILGTLNQ…KLLEGQELMV (319 aa). The interval 193-227 is coil 1A; that stretch reads LTGGVPMSPDSTVNLENVETQVTEMLTEVSNLTLE. The segment at 228 to 240 is linker 1; that stretch reads RVRLEIDVDHLRA. The segment at 241–341 is coil 1B; that stretch reads TADEIKSKYE…DALNVMREEY (101 aa). The interval 342 to 362 is linker 12; that stretch reads QQVVTKNVQEAETYCKMQIDQ. The interval 363 to 381 is coil 2A; sequence IQGISTQTTEQISILDKEI. A linker 2 region spans residues 382–389; sequence NTLEKELQ. The coil 2B stretch occupies residues 390–510; that stretch reads PLNVEYQRLL…SSVGYGASST (121 aa). Residues 511–603 are tail; it reads TLGAISGGYS…GHDSTIILQQ (93 aa). Low complexity predominate over residues 562-587; sequence SSSGGHSMYSSSSMKRSSSKSASASA. The tract at residues 562 to 603 is disordered; that stretch reads SSSGGHSMYSSSSMKRSSSKSASASAGGYGTSGHDSTIILQQ.

It belongs to the intermediate filament family. In terms of assembly, coiled-coil heterodimer of an alpha and a gamma subunit. Assemble into 10 nm filaments. Forms a massive, conical, intermediate filament biopolymer of approximately 60 cm.

It localises to the secreted. The protein resides in the extracellular space. Its function is as follows. Released extracellularly into seawater and provides physical and biological defense against invasive organism by modulation of the viscoelastic properties of mucus. This is Thread biopolymer filament subunit gamma from Eptatretus stoutii (Pacific hagfish).